The sequence spans 364 residues: Aminomethyltransferase (364 aa).

This sequence belongs to the GcvT family. As to quaternary structure, the glycine cleavage system is composed of four proteins: P, T, L and H.

The enzyme catalyses N(6)-[(R)-S(8)-aminomethyldihydrolipoyl]-L-lysyl-[protein] + (6S)-5,6,7,8-tetrahydrofolate = N(6)-[(R)-dihydrolipoyl]-L-lysyl-[protein] + (6R)-5,10-methylene-5,6,7,8-tetrahydrofolate + NH4(+). In terms of biological role, the glycine cleavage system catalyzes the degradation of glycine. This chain is Aminomethyltransferase, found in Shewanella piezotolerans (strain WP3 / JCM 13877).